We begin with the raw amino-acid sequence, 171 residues long: Small ribosomal subunit protein mS41 (171 aa).

Residues 1–23 constitute a mitochondrion transit peptide; it reads MSLFKSLVARSGSGIRAAQIARQ. Residues 122 to 141 form a disordered region; sequence REHKKGKKKNGGERNAKTVL.

Belongs to the mitochondrion-specific ribosomal protein mS41 family.

Its subcellular location is the mitochondrion. In terms of biological role, involved in telomere length regulation. The chain is Small ribosomal subunit protein mS41 (FYV4) from Scheffersomyces stipitis (strain ATCC 58785 / CBS 6054 / NBRC 10063 / NRRL Y-11545) (Yeast).